Reading from the N-terminus, the 295-residue chain is Protease HtpX (295 aa).

A run of 2 helical transmembrane segments spans residues 4 to 24 (ILLF…TLSL) and 42 to 62 (QLLI…LFIS). Zn(2+) is bound at residue histidine 147. Glutamate 148 is a catalytic residue. Residue histidine 151 coordinates Zn(2+). The next 2 helical transmembrane spans lie at 158 to 178 (VTLA…ARII) and 199 to 219 (VATI…VMWF). Glutamate 224 lines the Zn(2+) pocket.

It belongs to the peptidase M48B family. Requires Zn(2+) as cofactor.

It localises to the cell inner membrane. The chain is Protease HtpX from Pseudomonas fluorescens (strain ATCC BAA-477 / NRRL B-23932 / Pf-5).